The primary structure comprises 559 residues: Probable alpha-(1-&gt;6)-mannopyranosyltransferase MSMEG_3120/MSMEI_3041 (559 aa).

12 consecutive transmembrane segments (helical) span residues Phe-41 to Val-61, Val-81 to Gly-101, Ile-202 to Trp-222, Leu-247 to Leu-267, Trp-300 to Ser-316, Leu-321 to Gly-340, Ile-355 to Phe-375, Trp-386 to Leu-406, Ala-419 to Gly-439, Val-455 to Ala-475, Pro-480 to Ala-500, and Leu-507 to Leu-527. The segment covering Arg-535–Pro-548 has biased composition (pro residues). The tract at residues Arg-535 to Pro-559 is disordered.

It belongs to the MptA/B family.

Its subcellular location is the membrane. Catalyzes the addition of alpha-(1-&gt;6)-mannose residue. This is Probable alpha-(1-&gt;6)-mannopyranosyltransferase MSMEG_3120/MSMEI_3041 from Mycolicibacterium smegmatis (strain ATCC 700084 / mc(2)155) (Mycobacterium smegmatis).